We begin with the raw amino-acid sequence, 134 residues long: Ribonuclease VapC11 (134 aa).

One can recognise a PINc domain in the interval 2 to 126; the sequence is ILIDTSAWVE…ADFDVIARIT (125 aa). Residues aspartate 5 and aspartate 98 each coordinate Mg(2+).

This sequence belongs to the PINc/VapC protein family. The cofactor is Mg(2+).

Its function is as follows. Toxic component of a type II toxin-antitoxin (TA) system. Acts as an RNase. Its toxic effects on cell growth and colony formation are neutralized by coexpression with cognate antitoxin VapB11. The chain is Ribonuclease VapC11 from Mycobacterium tuberculosis (strain CDC 1551 / Oshkosh).